A 333-amino-acid chain; its full sequence is Adenosine deaminase (333 aa).

2 residues coordinate Zn(2+): H12 and H14. Substrate is bound by residues H14, D16, and G170. H197 is a binding site for Zn(2+). E200 functions as the Proton donor in the catalytic mechanism. D278 contacts Zn(2+). A substrate-binding site is contributed by D279.

It belongs to the metallo-dependent hydrolases superfamily. Adenosine and AMP deaminases family. Adenosine deaminase subfamily. Zn(2+) is required as a cofactor.

The enzyme catalyses adenosine + H2O + H(+) = inosine + NH4(+). The catalysed reaction is 2'-deoxyadenosine + H2O + H(+) = 2'-deoxyinosine + NH4(+). Catalyzes the hydrolytic deamination of adenosine and 2-deoxyadenosine. The polypeptide is Adenosine deaminase (Salmonella enteritidis PT4 (strain P125109)).